The following is a 247-amino-acid chain: Carboxy-S-adenosyl-L-methionine synthase (247 aa).

S-adenosyl-L-methionine contacts are provided by residues Tyr-38, 63–65 (GCS), Asn-131, and Arg-198.

It belongs to the class I-like SAM-binding methyltransferase superfamily. Cx-SAM synthase family. Homodimer.

It catalyses the reaction prephenate + S-adenosyl-L-methionine = carboxy-S-adenosyl-L-methionine + 3-phenylpyruvate + H2O. Its function is as follows. Catalyzes the conversion of S-adenosyl-L-methionine (SAM) to carboxy-S-adenosyl-L-methionine (Cx-SAM). In Desulforapulum autotrophicum (strain ATCC 43914 / DSM 3382 / VKM B-1955 / HRM2) (Desulfobacterium autotrophicum), this protein is Carboxy-S-adenosyl-L-methionine synthase.